An 86-amino-acid polypeptide reads, in one-letter code: Probable weak neurotoxin NNAM2 (86 aa).

The first 21 residues, 1–21, serve as a signal peptide directing secretion; that stretch reads MKTLLLTLVVVTIVCLDLGYT. 5 disulfides stabilise this stretch: Cys24-Cys45, Cys27-Cys32, Cys38-Cys63, Cys67-Cys78, and Cys79-Cys84.

The protein belongs to the three-finger toxin family. Ancestral subfamily. Orphan group II sub-subfamily. As to expression, expressed by the venom gland.

The protein localises to the secreted. Binds with low affinity to muscular (alpha-1-beta-1-delta-epsilon/CHRNA1-CHRNB1-CHRND-CHRNE) and very low affinity to neuronal (alpha-7/CHRNA7) nicotinic acetylcholine receptor (nAChR). This chain is Probable weak neurotoxin NNAM2, found in Naja atra (Chinese cobra).